A 419-amino-acid chain; its full sequence is Transcriptional regulator Myc-A (419 aa).

The 9aaTAD signature appears at Glu78–Gly86. 3 disordered regions span residues Ala141–Leu166, Ser206–Pro274, and Asn319–Glu344. The segment covering Glu226–Asp245 has biased composition (acidic residues). A compositionally biased stretch (basic and acidic residues) spans Thr248–Ser261. Positions Asn319–Ser328 are enriched in polar residues. The 53-residue stretch at Asp335 to Leu387 folds into the bHLH domain. A leucine-zipper region spans residues Leu387 to Leu415.

Efficient DNA binding requires dimerization with another bHLH protein. Binds DNA as a heterodimer with MAX.

It is found in the nucleus. Its function is as follows. Transcription factor that binds DNA in a non-specific manner, yet also specifically recognizes the core sequence 5'-CAC[GA]TG-3'. Activates the transcription of growth-related genes. In Xenopus laevis (African clawed frog), this protein is Transcriptional regulator Myc-A (myc-a).